We begin with the raw amino-acid sequence, 470 residues long: 6-phospho-beta-galactosidase (470 aa).

D-galactose 6-phosphate contacts are provided by Q19, H116, N159, E160, and N297. Catalysis depends on E160, which acts as the Proton donor. E375 acts as the Nucleophile in catalysis. D-galactose 6-phosphate-binding residues include S430, W431, K437, and Y439.

It belongs to the glycosyl hydrolase 1 family.

The catalysed reaction is a 6-phospho-beta-D-galactoside + H2O = D-galactose 6-phosphate + an alcohol. Its pathway is carbohydrate metabolism; lactose degradation; D-galactose 6-phosphate and beta-D-glucose from lactose 6-phosphate: step 1/1. The chain is 6-phospho-beta-galactosidase from Staphylococcus aureus (strain USA300).